Reading from the N-terminus, the 132-residue chain is Small ribosomal subunit protein uS8 (132 aa).

It belongs to the universal ribosomal protein uS8 family. As to quaternary structure, part of the 30S ribosomal subunit. Contacts proteins S5 and S12.

Its function is as follows. One of the primary rRNA binding proteins, it binds directly to 16S rRNA central domain where it helps coordinate assembly of the platform of the 30S subunit. In Brucella abortus (strain S19), this protein is Small ribosomal subunit protein uS8.